The sequence spans 310 residues: MQAPPPEHCPGVESEQAGLVSACAGCPNQRICSDPNKKLEDPGKALVAAAMKDVKHKLLILSGKGGVGKSTVTTLLTRYLARSYPDSNFGVLDIDICGPSQPRLLGAVGENVHQSGSGWSPVGIDDNVCLMSIGFLLGSVDDAIIWRGPKKNGMIRQFLSEVDWGTLDLLLLDTPPGTSDEHLSVVSYLRDDSAPDSLKAIIVTTPQEVALLDVRKEINFCKKQRIPIVGVVENMSSFRCGNCGNSSEIFPAKTGGAAAMCQEMDVPLLGSLPLDPQVTRACDSGEDITAINNSTTEALATICSKIMASL.

Residues cysteine 9, cysteine 23, cysteine 26, and cysteine 32 each coordinate [4Fe-4S] cluster. Residue 63 to 70 (GKGGVGKS) coordinates ATP. Positions 240 and 243 each coordinate [4Fe-4S] cluster.

Belongs to the Mrp/NBP35 ATP-binding proteins family. NUBP1/NBP35 subfamily. As to quaternary structure, heterotetramer of 2 Nubp1 and 2 Nubp2 chains. Requires [4Fe-4S] cluster as cofactor.

It localises to the cytoplasm. Component of the cytosolic iron-sulfur (Fe/S) protein assembly (CIA) machinery. Required for maturation of extramitochondrial Fe-S proteins. The Nubp1-Nubp2 heterotetramer forms a Fe-S scaffold complex, mediating the de novo assembly of an Fe-S cluster and its transfer to target apoproteins. This chain is Cytosolic Fe-S cluster assembly factor Nubp1 homolog, found in Drosophila mojavensis (Fruit fly).